A 375-amino-acid polypeptide reads, in one-letter code: Actin-binding Rho-activating protein (375 aa).

The disordered stretch occupies residues 37-101 (ANENSTRQAQ…ATEVSHIKRK (65 aa)). Over residues 80–101 (PDGDREGRGSEEATEVSHIKRK) the composition is skewed to basic and acidic residues. 2 positions are modified to phosphoserine: Ser150 and Ser182. The interval 175-197 (EPKWKSDSIDTEDSGYGGDMEER) is disordered. 2 actin-binding regions span residues 193 to 293 (DMEE…AERA) and 294 to 375 (KRAE…TLLE). 2 interaction with actin regions span residues 234–279 (SQVD…GDEG) and 346–375 (MRARKHGLVHFEGEMLWQGKDDHVVITLLE).

Binds F-actin and ABLIM1, ABLIM2 and ABLIM3. Interaction with ABLIM2 and ABLIM3 enhances activity. In terms of tissue distribution, predominantly expressed in heart and skeletal muscle, and expressed at lower levels in adrenal gland, brain, kidney, liver, and testis.

Its subcellular location is the cytoplasm. It localises to the myofibril. The protein localises to the sarcomere. It is found in the cytoskeleton. In terms of biological role, acts as an activator of serum response factor (SRF)-dependent transcription possibly by inducing nuclear translocation of MKL1 or MKL2 and through a mechanism requiring Rho-actin signaling. The polypeptide is Actin-binding Rho-activating protein (Rattus norvegicus (Rat)).